Reading from the N-terminus, the 685-residue chain is Sulfate transporter 4.1, chloroplastic (685 aa).

Residues 1–23 (MSYASLSVKDLTSLVSRSGTGSS) constitute a chloroplast transit peptide. Positions 15-26 (VSRSGTGSSSSL) are enriched in low complexity. The segment at 15 to 53 (VSRSGTGSSSSLKPPGQTRPVKVIPLQHPDTSNEARPPS) is disordered. 12 helical membrane-spanning segments follow: residues 97–117 (LDLM…MSYA), 122–142 (LPPI…AIFG), 147–167 (LAIG…GGIA), 175–195 (IELA…MGLL), 203–223 (FISH…IGLS), 255–275 (WPPF…KHVG), 283–303 (FLRA…AKVF), 332–352 (TLLP…VGIA), 369–389 (LFGL…PATG), 406–426 (LSGL…TPMF), 434–454 (LAAI…AIFL), and 473–493 (LFFG…AFVI). Positions 518–642 (QYPEAYTYNG…VRVHDAVQVC (125 aa)) constitute an STAS domain.

The protein belongs to the SLC26A/SulP transporter (TC 2.A.53) family. As to expression, expressed both in roots and leaves.

It is found in the plastid. The protein localises to the chloroplast membrane. In terms of biological role, h(+)/sulfate cotransporter that may play a role in the regulation of sulfate assimilation. The polypeptide is Sulfate transporter 4.1, chloroplastic (SULTR4;1) (Arabidopsis thaliana (Mouse-ear cress)).